Reading from the N-terminus, the 621-residue chain is Pentatricopeptide repeat-containing protein At1g12620 (621 aa).

16 PPR repeats span residues 36 to 70, 71 to 105, 106 to 140, 141 to 175, 176 to 210, 211 to 245, 246 to 280, 281 to 315, 316 to 350, 351 to 385, 386 to 420, 421 to 455, 456 to 490, 491 to 525, 526 to 560, and 561 to 595; these read GKVS…RPRP, RLID…GIAH, NLYT…GYEP, DTVT…GHKP, TLIT…GFQP, NEVT…KIKL, DAVK…GFKA, DIII…KITP, DVVA…GISP, DTVT…GCGP, NIRT…GVVA, DTVT…RVRP, DIVS…KMEL, DIGI…GVKP, DVKT…GHSP, and NGCT…GFSV.

This sequence belongs to the PPR family. P subfamily.

In Arabidopsis thaliana (Mouse-ear cress), this protein is Pentatricopeptide repeat-containing protein At1g12620.